A 765-amino-acid chain; its full sequence is MNLPEYHRLAAYITSDHSQDYTQDTNVAFIEEGPWDGEEEELITSFSTVEDLYTAICVREDNNQLDMALKFAPFASEIELPFYTALSQLKIDHDKLDDSARPVLGLYEPRATQSPDQSSRMRVLGNALSSNEVPSGHIRAEGKIKNVNTIEDFKNMDKQAMLQTSAKQIWDAINDGTIYSIPSLLSSFTILSFANLKKYTFTYWFAFPALHSEPAWRKVEQPPKFSAEETTALTEELGTWRYSHDNREHGFFLAKRVYPSSEHPQDPESESTSDLPFKWVIGSLREFESGFFNGVDAKNQYVSFVDPSTYHENPGWMLRNLLVLVRRRYKLDKVQILCYRDNHAKRHVPQSLILILESIYDPEYQSTAPDQIPKVTGWERNSLGKLTAKVTNLAQYMDPAQLADQAVDLNLKLMKWRIAPELNLDAIKNTKCLLLGAGTLGTYVSRLLMGWGVRKITFVDNASVSFSNPVRQPLFDFKDCIDGGAKKAYRASEALQEIYPGVDSTGHVMAVPMLGHPITDEAATKMNFELLQKLIEDHDAIFLLMDTRESRWLPTVMGKAAGKIVMNAALGFDTYVVMRHGVTPEDGGPAALGCYFCNDVVAPSDSVKDQTLDQQCTVTRPGVAPEASSKLVELLASVLQHPLKGAAPAPKLSSNHQSGQLEFDRDPPNHPLGLVPHQIRGFLAAYKTMLISGPSYDCCSACSPKIVNAYKEDGWEFIKRALTEKDYITELSGLAEVQRKAEAAANDVEWDSDEEGMEDEEPELL.

Residues 436 to 441 (GAGTLG) carry the GXGXXG motif motif. Residue Cys-616 is the Glycyl thioester intermediate of the active site. 2 disordered regions span residues 646 to 670 (AAPAPKLSSNHQSGQLEFDRDPPNH) and 744 to 765 (AANDVEWDSDEEGMEDEEPELL). The homodimerization stretch occupies residues 721-760 (ALTEKDYITELSGLAEVQRKAEAAANDVEWDSDEEGMEDE). Residues 748–765 (VEWDSDEEGMEDEEPELL) are compositionally biased toward acidic residues.

It belongs to the ATG7 family. Homodimer. Interacts with ATG8 through a thioester bond between Cys-616 and the C-terminal Gly of ATG8 and with ATG12 through a thioester bond between Cys-616 and the C-terminal Gly of ATG12. Also interacts with ATG3.

The protein localises to the cytoplasm. Its subcellular location is the preautophagosomal structure. Its function is as follows. E1-like activating enzyme involved in the 2 ubiquitin-like systems required for cytoplasm to vacuole transport (Cvt) and autophagy. Activates ATG12 for its conjugation with ATG5 and ATG8 for its conjugation with phosphatidylethanolamine. Both systems are needed for the ATG8 association to Cvt vesicles and autophagosomes membranes. Autophagy is essential for maintenance of amino acid levels and protein synthesis under nitrogen starvation. Required for selective autophagic degradation of the nucleus (nucleophagy) as well as for mitophagy which contributes to regulate mitochondrial quantity and quality by eliminating the mitochondria to a basal level to fulfill cellular energy requirements and preventing excess ROS production. Required for normal mycelial growth and conidiogenesis, and regulates sclerotial formation. Plays an essential role in pathogenesis. The sequence is that of Ubiquitin-like modifier-activating enzyme atg7 from Botryotinia fuckeliana (strain BcDW1) (Noble rot fungus).